The primary structure comprises 423 residues: Glucose-6-phosphate isomerase (423 aa).

The active-site Proton donor is the Glu-279. Catalysis depends on residues His-300 and Lys-413.

This sequence belongs to the GPI family.

Its subcellular location is the cytoplasm. The catalysed reaction is alpha-D-glucose 6-phosphate = beta-D-fructose 6-phosphate. Its pathway is carbohydrate biosynthesis; gluconeogenesis. It functions in the pathway carbohydrate degradation; glycolysis; D-glyceraldehyde 3-phosphate and glycerone phosphate from D-glucose: step 2/4. In terms of biological role, catalyzes the reversible isomerization of glucose-6-phosphate to fructose-6-phosphate. This Acholeplasma laidlawii (strain PG-8A) protein is Glucose-6-phosphate isomerase.